The following is a 454-amino-acid chain: tRNA modification GTPase MnmE (454 aa).

(6S)-5-formyl-5,6,7,8-tetrahydrofolate is bound by residues arginine 23, glutamate 80, and lysine 120. In terms of domain architecture, TrmE-type G spans 216–377; the sequence is GMKVVIAGRP…LRNHLKQSMG (162 aa). Asparagine 226 contributes to the K(+) binding site. Residues 226–231, 245–251, 270–273, 335–338, and 358–360 contribute to the GTP site; these read NAGKSS, TDIAGTT, DTAG, NKAD, and SAR. Position 230 (serine 230) interacts with Mg(2+). Residues threonine 245, isoleucine 247, and threonine 250 each coordinate K(+). Threonine 251 is a Mg(2+) binding site. A (6S)-5-formyl-5,6,7,8-tetrahydrofolate-binding site is contributed by lysine 454.

The protein belongs to the TRAFAC class TrmE-Era-EngA-EngB-Septin-like GTPase superfamily. TrmE GTPase family. As to quaternary structure, homodimer. Heterotetramer of two MnmE and two MnmG subunits. K(+) serves as cofactor.

Its subcellular location is the cytoplasm. Functionally, exhibits a very high intrinsic GTPase hydrolysis rate. Involved in the addition of a carboxymethylaminomethyl (cmnm) group at the wobble position (U34) of certain tRNAs, forming tRNA-cmnm(5)s(2)U34. The chain is tRNA modification GTPase MnmE from Escherichia coli O17:K52:H18 (strain UMN026 / ExPEC).